A 234-amino-acid chain; its full sequence is NAD-dependent protein deacetylase (234 aa).

Positions 1-234 constitute a Deacetylase sirtuin-type domain; it reads MSDITAAQTT…AVDFFEGVQV (234 aa). Residues Ala-23, Thr-27, Arg-35, Gln-99, Ile-101, Asp-102, His-117, Thr-184, Ser-185, Asn-208, and Val-226 each contribute to the NAD(+) site. Positions 101 and 102 each coordinate nicotinamide. The active-site Proton acceptor is the His-117.

Belongs to the sirtuin family. Class U subfamily.

It is found in the cytoplasm. It catalyses the reaction N(6)-acetyl-L-lysyl-[protein] + NAD(+) + H2O = 2''-O-acetyl-ADP-D-ribose + nicotinamide + L-lysyl-[protein]. Functionally, NAD-dependent protein deacetylase which modulates the activities of several enzymes which are inactive in their acetylated form. This Lactiplantibacillus plantarum (strain ATCC BAA-793 / NCIMB 8826 / WCFS1) (Lactobacillus plantarum) protein is NAD-dependent protein deacetylase.